A 435-amino-acid chain; its full sequence is Methylenetetrahydrofolate--tRNA-(uracil-5-)-methyltransferase TrmFO (435 aa).

10–15 (GAGLAG) serves as a coordination point for FAD.

It belongs to the MnmG family. TrmFO subfamily. The cofactor is FAD.

The protein resides in the cytoplasm. The catalysed reaction is uridine(54) in tRNA + (6R)-5,10-methylene-5,6,7,8-tetrahydrofolate + NADH + H(+) = 5-methyluridine(54) in tRNA + (6S)-5,6,7,8-tetrahydrofolate + NAD(+). It carries out the reaction uridine(54) in tRNA + (6R)-5,10-methylene-5,6,7,8-tetrahydrofolate + NADPH + H(+) = 5-methyluridine(54) in tRNA + (6S)-5,6,7,8-tetrahydrofolate + NADP(+). In terms of biological role, catalyzes the folate-dependent formation of 5-methyl-uridine at position 54 (M-5-U54) in all tRNAs. In Geotalea uraniireducens (strain Rf4) (Geobacter uraniireducens), this protein is Methylenetetrahydrofolate--tRNA-(uracil-5-)-methyltransferase TrmFO.